A 123-amino-acid polypeptide reads, in one-letter code: Large ribosomal subunit protein bL12 (123 aa).

This sequence belongs to the bacterial ribosomal protein bL12 family. Homodimer. Part of the ribosomal stalk of the 50S ribosomal subunit. Forms a multimeric L10(L12)X complex, where L10 forms an elongated spine to which 2 to 4 L12 dimers bind in a sequential fashion. Binds GTP-bound translation factors.

In terms of biological role, forms part of the ribosomal stalk which helps the ribosome interact with GTP-bound translation factors. Is thus essential for accurate translation. The chain is Large ribosomal subunit protein bL12 from Laribacter hongkongensis (strain HLHK9).